The following is a 400-amino-acid chain: Subtilisin-like protease 11 (400 aa).

The first 19 residues, 1 to 19, serve as a signal peptide directing secretion; the sequence is MGLFKVIFTAVAALSAVDA. Positions 20-117 are excised as a propeptide; it reads AELLSSAKSK…VEHDRHVYIS (98 aa). The Inhibitor I9 domain maps to 35–116; that stretch reads SYLVVMKDSV…FVEHDRHVYI (82 aa). In terms of domain architecture, Peptidase S8 spans 127 to 400; that stretch reads SWGLGRVSHR…NKLLYNRSGK (274 aa). A glycan (N-linked (GlcNAc...) asparagine) is linked at N138. D159 (charge relay system) is an active-site residue. Residue N181 is glycosylated (N-linked (GlcNAc...) asparagine). H191 acts as the Charge relay system in catalysis. N-linked (GlcNAc...) asparagine glycosylation is found at N252 and N337. The Charge relay system role is filled by S346. N-linked (GlcNAc...) asparagine glycosylation is found at N388 and N396.

It belongs to the peptidase S8 family.

The protein resides in the secreted. Secreted subtilisin-like serine protease with keratinolytic activity that contributes to pathogenicity. The protein is Subtilisin-like protease 11 (SUB11) of Trichophyton verrucosum (strain HKI 0517).